Here is a 390-residue protein sequence, read N- to C-terminus: Chorismate synthase (390 aa).

NADP(+)-binding residues include Arg-48 and Arg-54. FMN-binding positions include 125–127 (RSS), 238–239 (NA), Gly-278, 293–297 (KPTSS), and Arg-319. Residues 359 to 390 (PRIPGSTTNQIHPVEMQASAPRAEDPEPDESS) are disordered.

Belongs to the chorismate synthase family. In terms of assembly, homotetramer. FMNH2 is required as a cofactor.

The enzyme catalyses 5-O-(1-carboxyvinyl)-3-phosphoshikimate = chorismate + phosphate. It functions in the pathway metabolic intermediate biosynthesis; chorismate biosynthesis; chorismate from D-erythrose 4-phosphate and phosphoenolpyruvate: step 7/7. Functionally, catalyzes the anti-1,4-elimination of the C-3 phosphate and the C-6 proR hydrogen from 5-enolpyruvylshikimate-3-phosphate (EPSP) to yield chorismate, which is the branch point compound that serves as the starting substrate for the three terminal pathways of aromatic amino acid biosynthesis. This reaction introduces a second double bond into the aromatic ring system. The chain is Chorismate synthase from Nitrosomonas europaea (strain ATCC 19718 / CIP 103999 / KCTC 2705 / NBRC 14298).